The chain runs to 453 residues: Crh-like protein CRH11 (453 aa).

The first 21 residues, 1–21 (MKFTTLATIASTLLFAANANA), serve as a signal peptide directing secretion. Cysteine 24 and cysteine 32 form a disulfide bridge. Positions 28–227 (KSSDCSPVPA…WAGGITDYSQ (200 aa)) constitute a GH16 domain. Residue glutamate 119 is the Nucleophile of the active site. The active-site Proton donor is the glutamate 123. Positions 123, 204, and 215 each coordinate chitin. 3 disordered regions span residues 281-343 (LESG…SEKS), 362-397 (KTTV…PASA), and 410-430 (GDAA…TENN). 3 stretches are compositionally biased toward low complexity: residues 286–343 (SVDS…SEKS), 363–397 (TTVT…PASA), and 412–425 (AAPS…PSVS). The N-linked (GlcNAc...) asparagine glycan is linked to asparagine 290. Asparagine 430 carries GPI-anchor amidated asparagine lipidation. Residues 431 to 453 (GAVSVAKTTSLFGFVALIGFLFV) constitute a propeptide, removed in mature form.

It belongs to the glycosyl hydrolase 16 family. CRH1 subfamily. In terms of processing, the GPI-anchor is attached to the protein in the endoplasmic reticulum and serves to target the protein to the cell surface. There, the glucosamine-inositol phospholipid moiety is cleaved off and the GPI-modified mannoprotein is covalently attached via its lipidless GPI glycan remnant to the 1,6-beta-glucan of the outer cell wall layer.

The protein localises to the secreted. It localises to the cell wall. The protein resides in the membrane. The catalysed reaction is Random endo-hydrolysis of N-acetyl-beta-D-glucosaminide (1-&gt;4)-beta-linkages in chitin and chitodextrins.. Its function is as follows. Dual chitinase/transglycosylase that plays a role in cell wall architecture. Chitinase and transglycosylase activities are coupled. Required for the polysaccharide cross-linking at the septa and the cell wall. More specifically, transfers chitin to 1,6-beta-glucan in the cell wall. Plays an important role in fungal pathogenesis via its functions in cell wall assembly and regeneration, filamentation, and adherence to host cells. In Candida albicans (strain SC5314 / ATCC MYA-2876) (Yeast), this protein is Crh-like protein CRH11 (CRH11).